Here is a 380-residue protein sequence, read N- to C-terminus: Cytochrome b (380 aa).

4 consecutive transmembrane segments (helical) span residues Phe34–Met54, Trp78–Ile99, Trp114–Leu134, and Phe179–Thr199. Heme b-binding residues include His84 and His98. Heme b-binding residues include His183 and His197. Position 202 (His202) interacts with a ubiquinone. The next 4 membrane-spanning stretches (helical) occupy residues Ile227–Ser247, Leu289–His309, Leu321–Ser341, and Phe348–Pro368.

It belongs to the cytochrome b family. The cytochrome bc1 complex contains 11 subunits: 3 respiratory subunits (MT-CYB, CYC1 and UQCRFS1), 2 core proteins (UQCRC1 and UQCRC2) and 6 low-molecular weight proteins (UQCRH/QCR6, UQCRB/QCR7, UQCRQ/QCR8, UQCR10/QCR9, UQCR11/QCR10 and a cleavage product of UQCRFS1). This cytochrome bc1 complex then forms a dimer. The cofactor is heme b.

It localises to the mitochondrion inner membrane. Functionally, component of the ubiquinol-cytochrome c reductase complex (complex III or cytochrome b-c1 complex) that is part of the mitochondrial respiratory chain. The b-c1 complex mediates electron transfer from ubiquinol to cytochrome c. Contributes to the generation of a proton gradient across the mitochondrial membrane that is then used for ATP synthesis. The chain is Cytochrome b (MT-CYB) from Alectoris graeca (Rock partridge).